A 921-amino-acid polypeptide reads, in one-letter code: Ubiquitin carboxyl-terminal hydrolase 11 (921 aa).

A compositionally biased stretch (low complexity) spans 1-16 (MAAVAADPAAAAVPAS). The interval 1-29 (MAAVAADPAAAAVPASAEDRETQPEAMPD) is disordered. The region spanning 28 to 133 (PDLDQQWRQI…DQPPIERKVI (106 aa)) is the DUSP domain. N6-acetyllysine is present on lysine 194. The USP domain maps to 257 to 889 (CGLTNLGNTC…AAYVLFYQRQ (633 aa)). The Nucleophile role is filled by cysteine 266. Residues 592–697 (TKPTSDDDDG…DRTTSPEEAQ (106 aa)) are disordered. Position 596 is a phosphoserine (serine 596). Residues 597–624 (DDDDGDEKGDENEDEDVEDDSSSEEEKE) show a composition bias toward acidic residues. Polar residues-rich tracts occupy residues 657-666 (LDNSLHTSQW) and 676-697 (FTLQ…EEAQ). Phosphoserine is present on serine 692. Histidine 847 (proton acceptor) is an active-site residue. The interval 893–921 (RRQSQTASSETPTSPASSSTPNSDIMDVN) is disordered. The span at 895-915 (QSQTASSETPTSPASSSTPNS) shows a compositional bias: low complexity. A Phosphoserine modification is found at serine 906.

Belongs to the peptidase C19 family. As to quaternary structure, monomer. Associated component of the Polycomb group (PcG) multiprotein PRC1-like complex. Interacts with RANBP9/RANBPM. Interacts with BRCA2. Interacts with CHUK/IKKA. Interacts with NFKBIA. Interacts with SPRY3, RAE1, MYCBP2/PAM, and KCTD6.

It is found in the nucleus. Its subcellular location is the cytoplasm. The protein localises to the chromosome. The enzyme catalyses Thiol-dependent hydrolysis of ester, thioester, amide, peptide and isopeptide bonds formed by the C-terminal Gly of ubiquitin (a 76-residue protein attached to proteins as an intracellular targeting signal).. Its function is as follows. Protease that can remove conjugated ubiquitin from target proteins and polyubiquitin chains. Inhibits the degradation of target proteins by the proteasome. Cleaves preferentially 'Lys-6' and 'Lys-63'-linked ubiquitin chains. Has lower activity with 'Lys-11' and 'Lys-33'-linked ubiquitin chains, and extremely low activity with 'Lys-27', 'Lys-29' and 'Lys-48'-linked ubiquitin chains (in vitro). Plays a role in the regulation of pathways leading to NF-kappa-B activation. Plays a role in the regulation of DNA repair after double-stranded DNA breaks. Acts as a chromatin regulator via its association with the Polycomb group (PcG) multiprotein PRC1-like complex; may act by deubiquitinating components of the PRC1-like comple. Promotes cell proliferation by deubiquitinating phosphorylated E2F1x. This chain is Ubiquitin carboxyl-terminal hydrolase 11, found in Rattus norvegicus (Rat).